The primary structure comprises 177 residues: Large ribosomal subunit protein uL5 (177 aa).

It belongs to the universal ribosomal protein uL5 family. Part of the 50S ribosomal subunit; part of the 5S rRNA/L5/L18/L25 subcomplex. Contacts the 5S rRNA and the P site tRNA. Forms a bridge to the 30S subunit in the 70S ribosome.

This is one of the proteins that bind and probably mediate the attachment of the 5S RNA into the large ribosomal subunit, where it forms part of the central protuberance. In the 70S ribosome it contacts protein S13 of the 30S subunit (bridge B1b), connecting the 2 subunits; this bridge is implicated in subunit movement. Contacts the P site tRNA; the 5S rRNA and some of its associated proteins might help stabilize positioning of ribosome-bound tRNAs. This chain is Large ribosomal subunit protein uL5, found in Ehrlichia chaffeensis (strain ATCC CRL-10679 / Arkansas).